The sequence spans 429 residues: Methanol:N,N-dimethyl-4-nitrosoaniline oxidoreductase (429 aa).

The protein belongs to the iron-containing alcohol dehydrogenase family. As to quaternary structure, homodecamer. It depends on Mg(2+) as a cofactor. Zn(2+) serves as cofactor. Requires NADPH as cofactor.

It carries out the reaction methanol + A = formaldehyde + AH2. Inhibited by azide and hydrazine. Functionally, catalyzes the oxidation of methanol to yield formaldehyde. While the in vivo electron acceptor is not known, N,N-dimethyl-4-nitrosoaniline (NDMA) can serve this function in vitro and is reduced to 4-(hydroxylamino)-N,N-dimethylaniline. It can also use various other primary alcohols, polyols and formaldehyde. In addition, MNO is able to produce methylformate from methanol plus formaldehyde, and possesses a formaldehyde dismutase and a NADH-dependent formaldehyde reductase activity. This is Methanol:N,N-dimethyl-4-nitrosoaniline oxidoreductase (mno) from Amycolatopsis methanolica.